The following is a 302-amino-acid chain: Haloalkane dehalogenase (302 aa).

In terms of domain architecture, AB hydrolase-1 spans 48 to 152; the sequence is PILLMHGEPS…VVVSNTGLPI (105 aa). The active-site Nucleophile is the Asp123. Asp249 functions as the Proton donor in the catalytic mechanism. His278 functions as the Proton acceptor in the catalytic mechanism.

This sequence belongs to the haloalkane dehalogenase family. Type 1 subfamily. Monomer.

The catalysed reaction is 1-haloalkane + H2O = a halide anion + a primary alcohol + H(+). In terms of biological role, catalyzes hydrolytic cleavage of carbon-halogen bonds in halogenated aliphatic compounds, leading to the formation of the corresponding primary alcohols, halide ions and protons. This Caulobacter vibrioides (strain ATCC 19089 / CIP 103742 / CB 15) (Caulobacter crescentus) protein is Haloalkane dehalogenase.